The sequence spans 128 residues: Iron-sulfur cluster insertion protein ErpA 1 (128 aa).

Residues cysteine 47, cysteine 111, and cysteine 113 each contribute to the iron-sulfur cluster site.

The protein belongs to the HesB/IscA family. As to quaternary structure, homodimer. Iron-sulfur cluster serves as cofactor.

Functionally, required for insertion of 4Fe-4S clusters for at least IspG. This is Iron-sulfur cluster insertion protein ErpA 1 from Methylococcus capsulatus (strain ATCC 33009 / NCIMB 11132 / Bath).